The sequence spans 177 residues: Large ribosomal subunit protein uL6 (177 aa).

The protein belongs to the universal ribosomal protein uL6 family. As to quaternary structure, part of the 50S ribosomal subunit.

This protein binds to the 23S rRNA, and is important in its secondary structure. It is located near the subunit interface in the base of the L7/L12 stalk, and near the tRNA binding site of the peptidyltransferase center. The chain is Large ribosomal subunit protein uL6 from Rhizobium leguminosarum bv. trifolii (strain WSM2304).